Reading from the N-terminus, the 814-residue chain is G-type lectin S-receptor-like serine/threonine-protein kinase At1g61400 (814 aa).

Residues 1–34 (MDFLFLLLERKNKHMGKKRVVLLWLSIFISFSSA) form the signal peptide. One can recognise a Bulb-type lectin domain in the interval 35-154 (EITEESPLSI…VSGRTLWESF (120 aa)). The Extracellular segment spans residues 35 to 436 (EITEESPLSI…ELDVNKRKKT (402 aa)). 4 N-linked (GlcNAc...) asparagine glycosylation sites follow: Asn-63, Asn-104, Asn-127, and Asn-246. The EGF-like; atypical domain occupies 288 to 324 (PANSCDIYGVCGPFGFCVISVPPKCKCFKGFIPKSIE). 2 cysteine pairs are disulfide-bonded: Cys-292–Cys-304 and Cys-298–Cys-312. 3 N-linked (GlcNAc...) asparagine glycosylation sites follow: Asn-330, Asn-346, and Asn-385. The 83-residue stretch at 343–425 (CQGNSTGKDA…GELLSIRLAR (83 aa)) folds into the PAN domain. Intrachain disulfides connect Cys-378–Cys-399 and Cys-382–Cys-388. Residues 437-457 (IIAITVSLTLFVILGFTAFGF) traverse the membrane as a helical segment. The Cytoplasmic segment spans residues 458–814 (WRRRVEQNAL…EMTESVIHGR (357 aa)). Residues 500–785 (FSLSNKLGHG…DLPLPKQPTF (286 aa)) form the Protein kinase domain. ATP-binding positions include 506–514 (LGHGGFGSV) and Lys-528. Phosphoserine is present on residues Ser-534 and Ser-549. The tract at residues 589–606 (KKRLEIDWPKRFDIIQGI) is caM-binding. The active-site Proton acceptor is Asp-625. Phosphoserine occurs at positions 629 and 642. Thr-659 is subject to Phosphothreonine. Residues Ser-702 and Ser-796 each carry the phosphoserine modification.

Belongs to the protein kinase superfamily. Ser/Thr protein kinase family.

It localises to the cell membrane. The enzyme catalyses L-seryl-[protein] + ATP = O-phospho-L-seryl-[protein] + ADP + H(+). It carries out the reaction L-threonyl-[protein] + ATP = O-phospho-L-threonyl-[protein] + ADP + H(+). This chain is G-type lectin S-receptor-like serine/threonine-protein kinase At1g61400, found in Arabidopsis thaliana (Mouse-ear cress).